A 515-amino-acid chain; its full sequence is Galactose-1-phosphate uridylyltransferase (515 aa).

Belongs to the galactose-1-phosphate uridylyltransferase type 2 family.

The protein resides in the cytoplasm. It catalyses the reaction alpha-D-galactose 1-phosphate + UDP-alpha-D-glucose = alpha-D-glucose 1-phosphate + UDP-alpha-D-galactose. It participates in carbohydrate metabolism; galactose metabolism. Its function is as follows. Transfers the UMP unit from UDP-glucose (UDP-Glc) to Gal1P. Can also transfer the UMP unit to GlcNAc1P and GalNAc1P. Involved in the general galactose metabolism, and also involved in the lacto-N-biose I/galacto-N-biose (LNB/GNB) degradation pathway, which is important for host intestinal colonization by bifidobacteria. In Bifidobacterium longum subsp. longum (strain ATCC 15707 / DSM 20219 / JCM 1217 / NCTC 11818 / E194b), this protein is Galactose-1-phosphate uridylyltransferase.